Consider the following 358-residue polypeptide: DNA polymerase IV (358 aa).

The UmuC domain maps to 4-185 (IIHIDMDCYF…LSLRKIPGVG (182 aa)). Mg(2+) contacts are provided by aspartate 8 and aspartate 103. Glutamate 104 is a catalytic residue.

The protein belongs to the DNA polymerase type-Y family. Monomer. Requires Mg(2+) as cofactor.

The protein resides in the cytoplasm. It carries out the reaction DNA(n) + a 2'-deoxyribonucleoside 5'-triphosphate = DNA(n+1) + diphosphate. Its function is as follows. Poorly processive, error-prone DNA polymerase involved in untargeted mutagenesis. Copies undamaged DNA at stalled replication forks, which arise in vivo from mismatched or misaligned primer ends. These misaligned primers can be extended by PolIV. Exhibits no 3'-5' exonuclease (proofreading) activity. May be involved in translesional synthesis, in conjunction with the beta clamp from PolIII. In Shewanella baltica (strain OS195), this protein is DNA polymerase IV.